A 493-amino-acid chain; its full sequence is Inosine-5'-monophosphate dehydrogenase (493 aa).

2 consecutive CBS domains span residues 97-155 and 159-219; these read VIID…NAPI and MTSE…AKDE. Residues Asp-253 and 303 to 305 each bind NAD(+); that span reads GIG. Residues Gly-305 and Gly-307 each contribute to the K(+) site. Ser-308 contacts IMP. Cys-310 contacts K(+). The active-site Thioimidate intermediate is Cys-310. Residues 343 to 345, 366 to 367, and 390 to 394 contribute to the IMP site; these read DGG, GS, and YRGMG. Residue Arg-406 is the Proton acceptor of the active site. Glu-421 contacts IMP. K(+) is bound by residues Glu-475, Ser-476, and His-477.

This sequence belongs to the IMPDH/GMPR family. In terms of assembly, homotetramer. The cofactor is K(+).

It catalyses the reaction IMP + NAD(+) + H2O = XMP + NADH + H(+). The protein operates within purine metabolism; XMP biosynthesis via de novo pathway; XMP from IMP: step 1/1. Its activity is regulated as follows. Mycophenolic acid (MPA) is a non-competitive inhibitor that prevents formation of the closed enzyme conformation by binding to the same site as the amobile flap. In contrast, mizoribine monophosphate (MZP) is a competitive inhibitor that induces the closed conformation. MPA is a potent inhibitor of mammalian IMPDHs but a poor inhibitor of the bacterial enzymes. MZP is a more potent inhibitor of bacterial IMPDH. Its function is as follows. Catalyzes the conversion of inosine 5'-phosphate (IMP) to xanthosine 5'-phosphate (XMP), the first committed and rate-limiting step in the de novo synthesis of guanine nucleotides, and therefore plays an important role in the regulation of cell growth. This is Inosine-5'-monophosphate dehydrogenase from Streptococcus pyogenes serotype M3 (strain ATCC BAA-595 / MGAS315).